We begin with the raw amino-acid sequence, 267 residues long: Ribosomal RNA small subunit methyltransferase A (267 aa).

The S-adenosyl-L-methionine site is built by Asn18, Leu20, Gly45, Glu66, Asp91, and Asn112.

It belongs to the class I-like SAM-binding methyltransferase superfamily. rRNA adenine N(6)-methyltransferase family. RsmA subfamily.

The protein localises to the cytoplasm. The enzyme catalyses adenosine(1518)/adenosine(1519) in 16S rRNA + 4 S-adenosyl-L-methionine = N(6)-dimethyladenosine(1518)/N(6)-dimethyladenosine(1519) in 16S rRNA + 4 S-adenosyl-L-homocysteine + 4 H(+). Functionally, specifically dimethylates two adjacent adenosines (A1518 and A1519) in the loop of a conserved hairpin near the 3'-end of 16S rRNA in the 30S particle. May play a critical role in biogenesis of 30S subunits. The polypeptide is Ribosomal RNA small subunit methyltransferase A (Shewanella sediminis (strain HAW-EB3)).